The following is a 216-amino-acid chain: RNA pyrophosphohydrolase (216 aa).

The region spanning 6–149 (GFRPNVGIIL…KRDVYQLALT (144 aa)) is the Nudix hydrolase domain. The Nudix box motif lies at 38-59 (GGIKYGETPMQAMYRELHEETG). Residues 159 to 188 (AQRTDKSRGPRAPRYPRVANGHAASEAPAA) are disordered.

It belongs to the Nudix hydrolase family. RppH subfamily. A divalent metal cation is required as a cofactor.

In terms of biological role, accelerates the degradation of transcripts by removing pyrophosphate from the 5'-end of triphosphorylated RNA, leading to a more labile monophosphorylated state that can stimulate subsequent ribonuclease cleavage. This is RNA pyrophosphohydrolase from Burkholderia mallei (strain NCTC 10247).